The following is a 466-amino-acid chain: Myocardial zonula adherens protein (466 aa).

Over residues 1-10 (MLRSTSTVTL) the composition is skewed to polar residues. The signal sequence occupies residues 1 to 16 (MLRSTSTVTLFSGGGA). The segment at 1 to 68 (MLRSTSTVTL…SNGESTKRLP (68 aa)) is disordered. Residues 45–55 (TEKKIERKDQP) show a composition bias toward basic and acidic residues. Coiled coils occupy residues 95-137 (NQLK…QDLS) and 187-415 (HIKD…LTET).

This sequence belongs to the MYZAP family. In terms of assembly, interacts with DSP, MPRIP and TJP1/ZO1. Interaction with MPRIP inhibits the activation of transcription factor SRF. Interacts with GRIN1. Interacts with DYNLL1. Detected in heart myocardium and lung.

Its subcellular location is the cytoplasm. The protein resides in the cytoskeleton. It localises to the cell membrane. It is found in the myofibril. The protein localises to the sarcomere. Its subcellular location is the i band. The protein resides in the z line. It localises to the cell junction. Functionally, plays a role in cellular signaling via Rho-related GTP-binding proteins and activation of transcription factor SRF. Targets TJP1 to cell junctions. In cortical neurons, may play a role in glutaminergic signal transduction through interaction with the NMDA receptor subunit GRIN1. This is Myocardial zonula adherens protein (Myzap) from Mus musculus (Mouse).